The following is a 309-amino-acid chain: Ribonuclease Z (309 aa).

Zn(2+) is bound by residues His63, His65, Asp67, His68, His141, Asp212, and His270. The active-site Proton acceptor is the Asp67.

The protein belongs to the RNase Z family. In terms of assembly, homodimer. It depends on Zn(2+) as a cofactor.

The enzyme catalyses Endonucleolytic cleavage of RNA, removing extra 3' nucleotides from tRNA precursor, generating 3' termini of tRNAs. A 3'-hydroxy group is left at the tRNA terminus and a 5'-phosphoryl group is left at the trailer molecule.. Functionally, zinc phosphodiesterase, which displays some tRNA 3'-processing endonuclease activity. Probably involved in tRNA maturation, by removing a 3'-trailer from precursor tRNA. The protein is Ribonuclease Z of Lactobacillus gasseri (strain ATCC 33323 / DSM 20243 / BCRC 14619 / CIP 102991 / JCM 1131 / KCTC 3163 / NCIMB 11718 / NCTC 13722 / AM63).